The sequence spans 147 residues: Large ribosomal subunit protein uL15 (147 aa).

A compositionally biased stretch (basic and acidic residues) spans 1–20; the sequence is MTMHLNDLKPADGARTERTR. Residues 1-64 are disordered; that stretch reads MTMHLNDLKP…GGQTPMQRRL (64 aa). Residues 23-33 are compositionally biased toward gly residues; it reads RGIGSGLGKTC. A compositionally biased stretch (basic residues) spans 34 to 47; that stretch reads GRGHKGSFARKGGG.

It belongs to the universal ribosomal protein uL15 family. Part of the 50S ribosomal subunit.

Binds to the 23S rRNA. This Xanthomonas campestris pv. campestris (strain 8004) protein is Large ribosomal subunit protein uL15.